The chain runs to 1214 residues: Delta-latroinsectotoxin-Lt1a (1214 aa).

The tract at residues 64–89 is helix H2 is the probable transmembrane region of the tetrameric pore inserted in the target cell membrane; the sequence is IGSIPVIGEVVGIVTAPIAIVSHITS. Residues 250-269 are helix H8 is the probable transmembrane region of the tetrameric pore inserted in the target cell membrane; it reads ALYALFYGTQTYAAVMFFLL. ANK repeat units follow at residues 464–497, 501–532, 536–565, 570–600, 604–633, 637–666, 670–699, 706–734, 740–769, 773–802, 806–835, 839–868, 872–901, 906–936, and 966–994; these read DIHR…DIEA, NDRS…DIEL, NGFT…DVNA, TNLT…KVNE, DGFT…DKNA, SGLT…DLNI, NHMA…KVSI, NNWT…DINL, GNLT…NIEE, EGYT…DIEA, DNLT…DIGA, DGST…NLKE, NKYL…SLKD, EGRT…TLDE, and VKPT…PEGS. The propeptide at 1020-1214 is C-terminal domain cleavage is required for toxin activation; that stretch reads IVKETNSRYL…IDVHQKMFLR (195 aa).

This sequence belongs to the cationic peptide 01 (latrotoxin) family. 04 (delta-latroinsectotoxin) subfamily. In terms of assembly, homotetramer in membrane. In terms of tissue distribution, expressed by the venom gland.

It is found in the secreted. It localises to the target cell membrane. In terms of biological role, insecticidal presynaptic neurotoxin that induces massive neurotransmitter release at insect (but not vertebrate) neuromuscular junctions. Native toxin forms cation-permeable pores (with high permeability to calcium) in lipid membranes locust muscle membrane and artificial lipid bilayers. May bind to insect neurexin-1 homolog, insect adhesion G protein-coupled receptor L1 homolog, and insect receptor-type tyrosine-protein phosphatase S homolog, and induces neurotransmitter exocytosis both by forming tetrameric pores in membranes and signaling via G protein-coupled receptor. Oligomerization is a process independent of divalent cations. This Latrodectus tredecimguttatus (Mediterranean black widow spider) protein is Delta-latroinsectotoxin-Lt1a.